Consider the following 404-residue polypeptide: uncharacterized protein (404 aa).

2 helical membrane passes run Ile-35–Leu-55 and Glu-92–Ile-112.

It is found in the membrane. This is an uncharacterized protein from Saccharomyces cerevisiae (strain ATCC 204508 / S288c) (Baker's yeast).